A 441-amino-acid polypeptide reads, in one-letter code: MEDAWEADALEAAEAAAAAAQAVAADAPTTTPSPRTLQRQRACEALMEGDAPDAAPDAPLRCAIAWDGVNCWPETPAGALAVQPCFDELNGIRYDIRQNATRMCYSNGTWRNYSDYVHCRELVEAESDEDAAMAFVFFVGFCLSLVAIAVAIWIFLYFKDLRCLRNTIHTNLMATYICNDATWIISAVVQEYVENGGLCSVLAVLMHYFYLTNFFWMFVEGLYLFLLVVATFTGEKVKLQIYIIIGWGIPGVIVVTWAIIKHLGKTAPDNAGESHPMVLLIKHCPWMAEDYFDWIHQAPVITVLAVNLVFLFSIMWVLITKLQSANTAETQQYRKATKALLVLFPLLGITYILMMQGPMDGVAGHVFRNAQALLLSLQGFTVALFYCFLNTEVQNTLRHRMSRWRETRTVGGGRRYTLSGHSKDWSPRSRTESIRCLQHRS.

N-linked (GlcNAc...) asparagine glycans are attached at residues N99, N107, and N112. A helical membrane pass occupies residues 135–158; that stretch reads FVFFVGFCLSLVAIAVAIWIFLYF. Topologically, residues 159–166 are cytoplasmic; that stretch reads KDLRCLRN. A helical transmembrane segment spans residues 167-187; the sequence is TIHTNLMATYICNDATWIISA. The Extracellular segment spans residues 188-194; that stretch reads VVQEYVE. The chain crosses the membrane as a helical span at residues 195 to 224; it reads NGGLCSVLAVLMHYFYLTNFFWMFVEGLYL. Residues 225 to 238 lie on the Cytoplasmic side of the membrane; that stretch reads FLLVVATFTGEKVK. Residues 239–260 traverse the membrane as a helical segment; sequence LQIYIIIGWGIPGVIVVTWAII. The Extracellular segment spans residues 261–291; it reads KHLGKTAPDNAGESHPMVLLIKHCPWMAEDY. A helical transmembrane segment spans residues 292–315; sequence FDWIHQAPVITVLAVNLVFLFSIM. Residues 316–338 lie on the Cytoplasmic side of the membrane; that stretch reads WVLITKLQSANTAETQQYRKATK. The helical transmembrane segment at 339-357 threads the bilayer; the sequence is ALLVLFPLLGITYILMMQG. The Extracellular segment spans residues 358–371; it reads PMDGVAGHVFRNAQ. The chain crosses the membrane as a helical span at residues 372-391; that stretch reads ALLLSLQGFTVALFYCFLNT. Topologically, residues 392–441 are cytoplasmic; it reads EVQNTLRHRMSRWRETRTVGGGRRYTLSGHSKDWSPRSRTESIRCLQHRS.

It belongs to the G-protein coupled receptor 2 family. Expressed in Malpighian tubules.

The protein resides in the cell membrane. Functionally, receptor for the insect diurectic hormone. The activity of this receptor is mediated by G proteins which activate adenylyl cyclase. The protein is Diuretic hormone receptor of Acheta domesticus (House cricket).